The following is a 299-amino-acid chain: N-carbamoylputrescine amidase (299 aa).

One can recognise a CN hydrolase domain in the interval 10–268; that stretch reads VVVSSLQFAC…EAVLVAQFDL (259 aa). The active-site Proton acceptor is the Glu-49. Lys-122 (proton donor) is an active-site residue. Cys-159 functions as the Nucleophile in the catalytic mechanism.

The protein belongs to the carbon-nitrogen hydrolase superfamily. In terms of assembly, homooctamer (isoform 2). As to expression, expressed in roots, stems, leaves and flowers.

The catalysed reaction is N-carbamoylputrescine + H2O + 2 H(+) = putrescine + NH4(+) + CO2. The protein operates within amine and polyamine biosynthesis; putrescine biosynthesis via agmatine pathway; putrescine from N-carbamoylputrescine (amidase route): step 1/1. Its function is as follows. Involved in polyamine biosynthesis. Catalyzes the hydrolysis of N-carbamoylputrescine to produce putrescine and ammonia. The protein is N-carbamoylputrescine amidase of Arabidopsis thaliana (Mouse-ear cress).